Reading from the N-terminus, the 488-residue chain is MSVITEQNTYLNFINGEWVKSQSGDMVKVENPADVNDIVGYVQNSTAEDVERAVTAANEAKTAWRKLTGAERGQYLYKTADIMEQRLEEIAACATREMGKTLPEAKGETARGIAILRYYAGEGMRKTGDVIPSTDKDALMFTTRVPLGVVGVISPWNFPVAIPIWKMAPALVYGNTVVIKPATETAVTCAKIIACFEEAGLPAGVINLVTGPGSVVGQGLAEHDGVNAVTFTGSNQVGKIIGQAALARGAKYQLEMGGKNPVIVADDADLEAAAEAVITGAFRSTGQKCTATSRVIVQSGIYERFKEKLLQRTKDITIGDSLKEDVWMGPIASKNQLDNCLSYIEKGKQEGASLLIGGEKLENGKYQNGYYVQPAIFDNVTSEMTIAQEEIFGPVIALIKVDSIEEALNIANDVKFGLSASIFTENIGRMLSFIDEIDAGLVRINAESAGVELQAPFGGMKQSSSHSREQGEAAKDFFTAIKTVFVKP.

NAD(+) contacts are provided by residues lysine 180 and glycine 233–glycine 238. Glutamate 255 functions as the Proton acceptor in the catalytic mechanism. Cysteine 289 serves as the catalytic Nucleophile. Residues glutamine 336 and glutamate 390 each coordinate NAD(+).

It belongs to the aldehyde dehydrogenase family. As to quaternary structure, homotetramer.

It carries out the reaction 2,5-dioxopentanoate + NADP(+) + H2O = 2-oxoglutarate + NADPH + 2 H(+). The catalysed reaction is 2,5-dioxopentanoate + NAD(+) + H2O = 2-oxoglutarate + NADH + 2 H(+). Functionally, catalyzes the NAD(P)(+)-dependent oxidation of alpha-ketoglutaric semialdehyde (alphaKGSA) to alpha-ketoglutarate. Prefers NADP(+) to NAD(+) as a cosubstrate. In vitro, can also use various aldehydes. The polypeptide is Alpha-ketoglutaric semialdehyde dehydrogenase (Bacillus subtilis (strain 168)).